The chain runs to 135 residues: Hemoglobin subunit alpha (135 aa).

A Globin domain is found at 1–135 (AAVVALWGKI…VALALAERYK (135 aa)). Residue histidine 52 coordinates O2. Heme b is bound at residue histidine 81.

It belongs to the globin family. Hb1 is a heterotetramer of two alpha chains and two beta-1 chains. Hb2 is a heterotetramer of two alpha chains and two beta-2 chains. The N-terminus is blocked. As to expression, red blood cells.

Involved in oxygen transport from gills to the various peripheral tissues. The chain is Hemoglobin subunit alpha from Dissostichus eleginoides (Patagonian toothfish).